Here is a 386-residue protein sequence, read N- to C-terminus: WD repeat-containing protein 89 (386 aa).

WD repeat units follow at residues 21-65 (KEPT…VIRE), 68-106 (GYPG…GKPV), 111-155 (GYPS…QDLS), 167-207 (THSD…EDDA), 213-253 (NSVS…TDEP), and 318-357 (GHAA…KTFT).

The polypeptide is WD repeat-containing protein 89 (WDR89) (Bos taurus (Bovine)).